Here is a 33-residue protein sequence, read N- to C-terminus: Actin (33 aa).

The protein belongs to the actin family.

It is found in the cytoplasm. The protein localises to the cytoskeleton. The enzyme catalyses ATP + H2O = ADP + phosphate + H(+). In terms of biological role, actins are highly conserved proteins that are involved in various types of cell motility and are ubiquitously expressed in all eukaryotic cells. The protein is Actin of Dictyocaulus viviparus (Bovine lungworm).